The chain runs to 163 residues: Sorting nexin-3 (163 aa).

Residues 1-20 (MASDQDNSGLDAPGSQFHRP) are disordered. The PX domain occupies 42–159 (NFLEIEVRNP…AAFVQDPNWD (118 aa)). Positions 85, 87, 111, 116, and 125 each coordinate a 1,2-diacyl-sn-glycero-3-phospho-(1D-myo-inositol-3-phosphate).

The protein belongs to the sorting nexin family.

It localises to the cytoplasm. The protein localises to the golgi apparatus membrane. The protein resides in the prevacuolar compartment membrane. Functionally, required for retention of late Golgi membrane proteins. Component of the retrieval machinery that functions by direct interaction with the cytosolic tails of certain TGN membrane proteins during the sorting/budding process at the prevacuolar compartment. Binds phosphatidylinositol 3-phosphate (PtdIns(P3)). The sequence is that of Sorting nexin-3 (SNX3) from Gibberella zeae (strain ATCC MYA-4620 / CBS 123657 / FGSC 9075 / NRRL 31084 / PH-1) (Wheat head blight fungus).